A 123-amino-acid chain; its full sequence is Protein crumbs homolog 3 (123 aa).

An N-terminal signal peptide occupies residues 1–26 (MASPGLGLLLALGLPLLPARWGRAWG). Topologically, residues 27-59 (QTLDPHVNENGTITPSAPGSGSNGALSQEAITA) are extracellular. A glycan (N-linked (GlcNAc...) asparagine) is linked at asparagine 36. A helical transmembrane segment spans residues 60–80 (IIVVFSLLAAVLLAVGLVLLL). Residues 81 to 120 (RKLREKRQTQGTYRPSSEEQFNHAAEARAPQDSKETVRGC) are Cytoplasmic-facing. Residues 87-123 (RQTQGTYRPSSEEQFNHAAEARAPQDSKETVRGCLPI) are disordered. The span at 96-117 (SSEEQFNHAAEARAPQDSKETV) shows a compositional bias: basic and acidic residues. A PDZ-binding motif is present at residues 119–123 (GCLPI).

In terms of assembly, component of a complex composed of CRB3, PALS1 and PATJ. Interacts (via C-terminus) with PALS1 (via PDZ domain). Interacts with PARD6A. Interacts (via intracellular domain) with EPB41L5. Interacts with WDR83.

It is found in the apical cell membrane. Its subcellular location is the cell junction. The protein resides in the tight junction. Involved in the establishment of cell polarity in mammalian epithelial cells. Regulates the morphogenesis of tight junctions. Involved in promoting phosphorylation and cytoplasmic retention of transcriptional coactivators YAP1 and WWTR1/TAZ which leads to suppression of TGFB1-dependent transcription of target genes such as CCN2/CTGF, SERPINE1/PAI1, SNAI1/SNAIL1 and SMAD7. This is Protein crumbs homolog 3 from Canis lupus familiaris (Dog).